The primary structure comprises 273 residues: Shikimate dehydrogenase (NADP(+)) (273 aa).

Shikimate-binding positions include 14–16 (SKS) and threonine 61. Residue lysine 65 is the Proton acceptor of the active site. Positions 86 and 102 each coordinate shikimate. NADP(+)-binding positions include 126 to 130 (GAGGA), 150 to 155 (NRTHAK), and methionine 213. Shikimate is bound at residue tyrosine 215. Glycine 237 is a binding site for NADP(+).

It belongs to the shikimate dehydrogenase family. In terms of assembly, homodimer.

It catalyses the reaction shikimate + NADP(+) = 3-dehydroshikimate + NADPH + H(+). It functions in the pathway metabolic intermediate biosynthesis; chorismate biosynthesis; chorismate from D-erythrose 4-phosphate and phosphoenolpyruvate: step 4/7. Involved in the biosynthesis of the chorismate, which leads to the biosynthesis of aromatic amino acids. Catalyzes the reversible NADPH linked reduction of 3-dehydroshikimate (DHSA) to yield shikimate (SA). In Aeromonas salmonicida (strain A449), this protein is Shikimate dehydrogenase (NADP(+)).